Here is a 196-residue protein sequence, read N- to C-terminus: Putative 3-methyladenine DNA glycosylase (196 aa).

Belongs to the DNA glycosylase MPG family.

This Chlorobium luteolum (strain DSM 273 / BCRC 81028 / 2530) (Pelodictyon luteolum) protein is Putative 3-methyladenine DNA glycosylase.